The primary structure comprises 207 residues: Ras-related protein Rab-7a (207 aa).

The residue at position 2 (Thr2) is an N-acetylthreonine. Residues Ser17, Gly18, Val19, Gly20, Lys21, Thr22, Ser23, Ser34, Asn35, Tyr37, and Thr40 each coordinate GTP. Residue Thr22 participates in Mg(2+) binding. Residues 28-41 carry the Switch 1 motif; that stretch reads YVNKKFSNQYKATI. Mg(2+) contacts are provided by Thr40 and Asp63. Gly66 provides a ligand contact to GTP. A Switch 2 motif is present at residues 67–82; it reads QERFQSLGVAFYRGAD. Ser72 carries the post-translational modification Phosphoserine. GTP is bound by residues Asn125, Lys126, Asp128, Ala156, and Lys157. Glycyl lysine isopeptide (Lys-Gly) (interchain with G-Cter in ubiquitin) cross-links involve residues Lys191 and Lys194. S-geranylgeranyl cysteine attachment occurs at residues Cys205 and Cys207. A Cysteine methyl ester modification is found at Cys207.

This sequence belongs to the small GTPase superfamily. Rab family. As to quaternary structure, interacts with NTRK1/TRKA. Interacts with RILP. Interacts with PSMA7. Interacts with RNF115. Interacts with and FYCO1. Interacts with the PIK3C3/VPS34-PIK3R4 complex. The GTP-bound form interacts with OSBPL1A. The GTP-bound form interacts with RAC1. Interacts with CLN3. Interacts with CHM, the substrate-binding subunit of the Rab geranylgeranyltransferase complex. Interacts with C9orf72. Does not interact with HPS4 and the BLOC-3 complex (heterodimer of HPS1 and HPS4). Interacts with CLN5. Interacts with PLEKHM1 (via N- and C-terminus). Interacts with PRPH; the interaction is direct. Interacts with VPS13A. The GDP-bound form interacts with RIMOC1. Interacts with the MON1A-CCZ1B complex and this interaction is enhanced in the presence of RIMOC1. Interacts with VPS39 and VPS41. Forms a ternary complex with LAMP2 and RUFY4; the interaction with LAMP2 is mediated by RUFY4 (via RUN and coiled coil domains). Requires Mg(2+) as cofactor. Deubiquitination at Lys-191 and Lys-194 by USP32. Post-translationally, phosphorylated at Ser-72 by LRRK1; phosphorylation is dependent on protein kinase C (PKC) activation of LRRK1. In terms of processing, prenylated. Prenylation is required for association with cellular membranes. In terms of tissue distribution, expressed in osteoclasts and in neurons.

The protein localises to the cytoplasmic vesicle. The protein resides in the phagosome membrane. It localises to the late endosome membrane. Its subcellular location is the lysosome membrane. It is found in the melanosome membrane. The protein localises to the autophagosome membrane. The protein resides in the lipid droplet. It localises to the endosome membrane. Its subcellular location is the mitochondrion membrane. It carries out the reaction GTP + H2O = GDP + phosphate + H(+). Its activity is regulated as follows. Regulated by guanine nucleotide exchange factors (GEFs) which promote the exchange of bound GDP for free GTP. Regulated by GTPase activating proteins (GAPs) which increase the GTP hydrolysis activity. Inhibited by GDP dissociation inhibitors (GDIs). Functionally, the small GTPases Rab are key regulators of intracellular membrane trafficking, from the formation of transport vesicles to their fusion with membranes. Rabs cycle between an inactive GDP-bound form and an active GTP-bound form that is able to recruit to membranes different sets of downstream effectors directly responsible for vesicle formation, movement, tethering and fusion. In its active state, RAB7A binds to a variety of effector proteins playing a key role in the regulation of endo-lysosomal trafficking. Governs early-to-late endosomal maturation, microtubule minus-end as well as plus-end directed endosomal migration and positioning, and endosome-lysosome transport through different protein-protein interaction cascades. Also plays a central role in growth-factor-mediated cell signaling, nutrient-transporter-mediated nutrient uptake, neurotrophin transport in the axons of neurons and lipid metabolism. Also involved in regulation of some specialized endosomal membrane trafficking, such as maturation of melanosomes, pathogen-induced phagosomes (or vacuoles) and autophagosomes. Plays a role in the maturation and acidification of phagosomes that engulf pathogens, such as S.aureus and Mycobacteria. Plays a role in the fusion of phagosomes with lysosomes. In concert with RAC1, plays a role in regulating the formation of RBs (ruffled borders) in osteoclasts. Controls the endosomal trafficking and neurite outgrowth signaling of NTRK1/TRKA. Regulates the endocytic trafficking of the EGF-EGFR complex by regulating its lysosomal degradation. Involved in the ADRB2-stimulated lipolysis through lipophagy, a cytosolic lipase-independent autophagic pathway. Required for the exosomal release of SDCBP, CD63 and syndecan. Required for vesicular trafficking and cell surface expression of ACE2. May play a role in PRPH neuronal intermediate filament assembly. This chain is Ras-related protein Rab-7a, found in Rattus norvegicus (Rat).